Consider the following 395-residue polypeptide: Phosphoserine aminotransferase (395 aa).

Thr20 carries the post-translational modification Phosphothreonine. 80–81 (GT) serves as a coordination point for pyridoxal 5'-phosphate. At Ser112 the chain carries Phosphoserine. The pyridoxal 5'-phosphate site is built by Trp113, Thr170, Asp194, and Gln217. Lys218 carries the post-translational modification N6-(pyridoxal phosphate)lysine. 271–272 (NT) provides a ligand contact to pyridoxal 5'-phosphate.

This sequence belongs to the class-V pyridoxal-phosphate-dependent aminotransferase family. SerC subfamily. Homodimer. It depends on pyridoxal 5'-phosphate as a cofactor.

It carries out the reaction O-phospho-L-serine + 2-oxoglutarate = 3-phosphooxypyruvate + L-glutamate. The catalysed reaction is 4-(phosphooxy)-L-threonine + 2-oxoglutarate = (R)-3-hydroxy-2-oxo-4-phosphooxybutanoate + L-glutamate. It participates in amino-acid biosynthesis; L-serine biosynthesis; L-serine from 3-phospho-D-glycerate: step 2/3. Functionally, phosphoserine aminotransferase (PSAT) is a pyridoxal 5'-phosphate-dependent enzyme involved in the second step of the phosphorylated pathway of serine biosynthesis. Catalyzes the reversible conversion of 3-phosphohydroxypyruvate to phosphoserine and of 3-hydroxy-2-oxo-4-phosphonooxybutanoate to phosphohydroxythreonine. Plays an indirect role in purine biosynthesis. This chain is Phosphoserine aminotransferase, found in Saccharomyces cerevisiae (strain ATCC 204508 / S288c) (Baker's yeast).